Here is a 447-residue protein sequence, read N- to C-terminus: uncharacterized protein (447 aa).

Positions 29–201 constitute an FAD-binding PCMH-type domain; sequence VDVYPLVFVF…TQYTFKVHRA (173 aa).

It belongs to the oxygen-dependent FAD-linked oxidoreductase family. Requires FAD as cofactor.

The protein localises to the spore coat. This is an uncharacterized protein from Bacillus subtilis (strain 168).